The primary structure comprises 187 residues: Ethylene-responsive transcription factor ERF015 (187 aa).

Residues 26–83 constitute a DNA-binding region (AP2/ERF); sequence CYRGVRKRSWGKWVSEIRVPKTGRRIWLGSYDAPEKAARAYDAALFCIRGEKGVYNFP.

It belongs to the AP2/ERF transcription factor family. ERF subfamily.

It localises to the nucleus. Its function is as follows. Probably acts as a transcriptional activator. Binds to the GCC-box pathogenesis-related promoter element. May be involved in the regulation of gene expression by stress factors and by components of stress signal transduction pathways. The polypeptide is Ethylene-responsive transcription factor ERF015 (ERF015) (Arabidopsis thaliana (Mouse-ear cress)).